The sequence spans 160 residues: Transcription elongation factor GreA (160 aa).

The stretch at 1-72 (MAEKTYPMTL…QISSLETKIR (72 aa)) forms a coiled coil.

The protein belongs to the GreA/GreB family.

In terms of biological role, necessary for efficient RNA polymerase transcription elongation past template-encoded arresting sites. The arresting sites in DNA have the property of trapping a certain fraction of elongating RNA polymerases that pass through, resulting in locked ternary complexes. Cleavage of the nascent transcript by cleavage factors such as GreA or GreB allows the resumption of elongation from the new 3'terminus. GreA releases sequences of 2 to 3 nucleotides. The chain is Transcription elongation factor GreA from Streptococcus pneumoniae serotype 4 (strain ATCC BAA-334 / TIGR4).